Reading from the N-terminus, the 610-residue chain is MSRSPLNPSQLRSVGSQDALAPLPPPAPQNPSTHSWDPLCGSLPWGLSCLLALQHVLVMASLLCVSHLLLLCSLSPGGLSYSPSQLLASSFFSCGMSTILQTWMGSRLPLVQAPSLEFLIPALVLTSQKLPRAIQTPGNSSLMLHLCRGPSCHGLGHWNTSLQEVSGAVVVSGLLQGMMGLLGSPGHVFPHCGPLVLAPSLVVAGLSAHREVAQFCFTHWGLALLVILLMVVCSQHLGSCQFHVCPWRRASTSSTHTPLPVFRLLSVLIPVACVWIVSAFVGFSVIPQELSAPTKAPWIWLPHPGEWNWPLLTPRALAAGISMALAASTSSLGCYALCGRLLHLPPPPPHACSRGLSLEGLGSVLAGLLGSPMGTASSFPNVGKVGLIQAGSQQVAHLVGLLCVGLGLSPRLAQLLTTIPLPVVGGVLGVTQAVVLSAGFSSFYLADIDSGRNIFIVGFSIFMALLLPRWFREAPVLFSTGWSPLDVLLHSLLTQPIFLAGLSGFLLENTIPGTQLERGLGQGLPSPFTAQEARMPQKPREKAAQVYRLPFPIQNLCPCIPQPLHCLCPLPEDPGDEEGGSSEPEEMADLLPGSGEPCPESSREGFRSQK.

Residues 1–16 show a composition bias toward polar residues; sequence MSRSPLNPSQLRSVGS. A disordered region spans residues 1-32; it reads MSRSPLNPSQLRSVGSQDALAPLPPPAPQNPS. Residues 1–49 are Cytoplasmic-facing; that stretch reads MSRSPLNPSQLRSVGSQDALAPLPPPAPQNPSTHSWDPLCGSLPWGLSC. The helical transmembrane segment at 50-70 threads the bilayer; sequence LLALQHVLVMASLLCVSHLLL. Over 71 to 85 the chain is Extracellular; it reads LCSLSPGGLSYSPSQ. The chain crosses the membrane as a helical span at residues 86–106; the sequence is LLASSFFSCGMSTILQTWMGS. Over 107–164 the chain is Cytoplasmic; the sequence is RLPLVQAPSLEFLIPALVLTSQKLPRAIQTPGNSSLMLHLCRGPSCHGLGHWNTSLQE. Residues 165-185 traverse the membrane as a helical segment; that stretch reads VSGAVVVSGLLQGMMGLLGSP. Over 186–187 the chain is Extracellular; it reads GH. The helical transmembrane segment at 188–208 threads the bilayer; that stretch reads VFPHCGPLVLAPSLVVAGLSA. Residues 209–211 are Cytoplasmic-facing; that stretch reads HRE. Residues 212 to 232 traverse the membrane as a helical segment; it reads VAQFCFTHWGLALLVILLMVV. At 233–266 the chain is on the extracellular side; it reads CSQHLGSCQFHVCPWRRASTSSTHTPLPVFRLLS. A helical membrane pass occupies residues 267 to 287; that stretch reads VLIPVACVWIVSAFVGFSVIP. At 288-316 the chain is on the cytoplasmic side; sequence QELSAPTKAPWIWLPHPGEWNWPLLTPRA. The helical transmembrane segment at 317–337 threads the bilayer; sequence LAAGISMALAASTSSLGCYAL. At 338 to 355 the chain is on the extracellular side; it reads CGRLLHLPPPPPHACSRG. The helical transmembrane segment at 356–376 threads the bilayer; the sequence is LSLEGLGSVLAGLLGSPMGTA. Residues 377–394 are Cytoplasmic-facing; it reads SSFPNVGKVGLIQAGSQQ. Residues 395 to 414 traverse the membrane as a helical segment; sequence VAHLVGLLCVGLGLSPRLAQ. The Extracellular segment spans residues 415–423; sequence LLTTIPLPV. A helical transmembrane segment spans residues 424 to 446; the sequence is VGGVLGVTQAVVLSAGFSSFYLA. Residues 447-452 lie on the Cytoplasmic side of the membrane; it reads DIDSGR. Residues 453 to 472 traverse the membrane as a helical segment; the sequence is NIFIVGFSIFMALLLPRWFR. The Extracellular portion of the chain corresponds to 473–486; that stretch reads EAPVLFSTGWSPLD. Residues 487–507 traverse the membrane as a helical segment; it reads VLLHSLLTQPIFLAGLSGFLL. Topologically, residues 508–610 are cytoplasmic; sequence ENTIPGTQLE…SSREGFRSQK (103 aa). Residues 571–610 form a disordered region; that stretch reads PEDPGDEEGGSSEPEEMADLLPGSGEPCPESSREGFRSQK. The segment covering 573–588 has biased composition (acidic residues); it reads DPGDEEGGSSEPEEMA. The segment covering 601–610 has biased composition (basic and acidic residues); it reads SSREGFRSQK.

This sequence belongs to the nucleobase:cation symporter-2 (NCS2) (TC 2.A.40) family.

It is found in the membrane. It carries out the reaction hypoxanthine(out) + Na(+)(out) = hypoxanthine(in) + Na(+)(in). Its function is as follows. Acts as a sodium-dependent hypoxanthine transporter. May show xanthine-hypoxanthine exchange activity. The protein is Solute carrier family 23 member 3 (SLC23A3) of Homo sapiens (Human).